The chain runs to 565 residues: Augmin complex subunit dgt3 (565 aa).

Coiled-coil stretches lie at residues 135-171 and 212-241; these read ELQLREKDLIAECQSKAKQLEELQQENCRLSAEAKKA and QDYDEFQSAEEDLGREKAKLEDLERGIQFY.

This sequence belongs to the HAUS3 family. In terms of assembly, component of the augmin complex composed of dgt2, dgt3, dgt4, dgt5, dgt6, msd1, msd5 and wac. The complex interacts directly or indirectly with microtubules and is required for centrosome-independent generation of spindle microtubules.

Its subcellular location is the cytoplasm. The protein resides in the cytoskeleton. The protein localises to the spindle. Functionally, as part of the augmin complex, plays a role in centrosome-independent generation of spindle microtubules. The complex is required for mitotic spindle assembly through its involvement in localizing gamma-tubulin to spindle microtubules. The protein is Augmin complex subunit dgt3 of Drosophila melanogaster (Fruit fly).